The following is a 168-amino-acid chain: Ribosome maturation factor RimP (168 aa).

The protein belongs to the RimP family.

It is found in the cytoplasm. Its function is as follows. Required for maturation of 30S ribosomal subunits. The sequence is that of Ribosome maturation factor RimP from Rickettsia bellii (strain OSU 85-389).